The primary structure comprises 352 residues: Protein O-mannose kinase (352 aa).

The Cytoplasmic portion of the chain corresponds to 1-16 (MERKPSVCRKSGSWNC). A helical; Signal-anchor for type II membrane protein transmembrane segment spans residues 17-37 (LLVLFLLLLFTVVSVNFLLYM). Over 38–352 (YIDQMYAPSR…MAVAETREML (315 aa)) the chain is Lumenal. Residues 82 to 352 (VRKLKLVGEG…MAVAETREML (271 aa)) form the Protein kinase domain.

This sequence belongs to the protein kinase superfamily. Ser/Thr protein kinase family. STKL subfamily.

It localises to the endoplasmic reticulum membrane. The enzyme catalyses 3-O-[beta-D-GalNAc-(1-&gt;3)-beta-D-GlcNAc-(1-&gt;4)-alpha-D-Man]-L-Thr-[protein] + ATP = 3-O-[beta-D-GalNAc-(1-&gt;3)-beta-D-GlcNAc-(1-&gt;4)-(O-6-P-alpha-D-Man)]-Thr-[protein] + ADP + H(+). Protein O-mannose kinase that specifically mediates phosphorylation at the 6-position of an O-mannose of the trisaccharide (N-acetylgalactosamine (GalNAc)-beta-1,3-N-acetylglucosamine (GlcNAc)-beta-1,4-mannose) to generate phosphorylated O-mannosyl trisaccharide (N-acetylgalactosamine-beta-1,3-N-acetylglucosamine-beta-1,4-(phosphate-6-)mannose). Phosphorylated O-mannosyl trisaccharide is a carbohydrate structure present in alpha-dystroglycan (dag1), which is required for binding laminin G-like domain-containing extracellular proteins with high affinity. Only shows kinase activity when the GalNAc-beta-3-GlcNAc-beta-terminus is linked to the 4-position of O-mannose, suggesting that this disaccharide serves as the substrate recognition motif. This is Protein O-mannose kinase (pomk) from Xenopus laevis (African clawed frog).